Here is a 146-residue protein sequence, read N- to C-terminus: Ribonuclease H (146 aa).

An RNase H type-1 domain is found at M1–E141. Mg(2+) contacts are provided by D9, E47, D69, and D133.

This sequence belongs to the RNase H family. In terms of assembly, monomer. It depends on Mg(2+) as a cofactor.

The protein resides in the cytoplasm. It carries out the reaction Endonucleolytic cleavage to 5'-phosphomonoester.. Functionally, endonuclease that specifically degrades the RNA of RNA-DNA hybrids. The polypeptide is Ribonuclease H (Herminiimonas arsenicoxydans).